The sequence spans 453 residues: Formimidoylglutamate deiminase (453 aa).

2 residues coordinate Zn(2+): His56 and His58. Gln61, Arg82, Tyr121, His206, and Arg209 together coordinate N-formimidoyl-L-glutamate. His232 contacts Zn(2+). Glu235 serves as a coordination point for N-formimidoyl-L-glutamate. Catalysis depends on proton acceptor residues His269 and Asp320. Asp320 serves as a coordination point for Zn(2+).

Belongs to the metallo-dependent hydrolases superfamily. Homodimer. It depends on Zn(2+) as a cofactor.

It carries out the reaction N-formimidoyl-L-glutamate + H2O = N-formyl-L-glutamate + NH4(+). Its pathway is amino-acid degradation; L-histidine degradation into L-glutamate; L-glutamate from N-formimidoyl-L-glutamate (deiminase route): step 1/2. Its activity is regulated as follows. Inhibited by the metal chelator dipicolinate. Inhibited by N-formimino-L-aspartate and N-guanidino-L-glutaric acid. Functionally, catalyzes the hydrolysis of N-formimino-L-glutamate to N-formyl-L-glutamate and ammonia. The polypeptide is Formimidoylglutamate deiminase (Pseudomonas aeruginosa (strain ATCC 15692 / DSM 22644 / CIP 104116 / JCM 14847 / LMG 12228 / 1C / PRS 101 / PAO1)).